Reading from the N-terminus, the 205-residue chain is Holliday junction branch migration complex subunit RuvA (205 aa).

The domain I stretch occupies residues 1-64; sequence MIGRLRGLLV…EDAQLLYGFI (64 aa). The domain II stretch occupies residues 65–143; that stretch reads TKQERALFRL…SLMEASHGNE (79 aa). Residues 144 to 156 form a flexible linker region; the sequence is REFVLQSNYTPAP. Residues 157–205 form a domain III region; it reads VVNTAEEDAISALLALGYKPAQASKAVSSVFEEGMDSETLIKASLKSML.

Belongs to the RuvA family. In terms of assembly, homotetramer. Forms an RuvA(8)-RuvB(12)-Holliday junction (HJ) complex. HJ DNA is sandwiched between 2 RuvA tetramers; dsDNA enters through RuvA and exits via RuvB. An RuvB hexamer assembles on each DNA strand where it exits the tetramer. Each RuvB hexamer is contacted by two RuvA subunits (via domain III) on 2 adjacent RuvB subunits; this complex drives branch migration. In the full resolvosome a probable DNA-RuvA(4)-RuvB(12)-RuvC(2) complex forms which resolves the HJ.

It is found in the cytoplasm. In terms of biological role, the RuvA-RuvB-RuvC complex processes Holliday junction (HJ) DNA during genetic recombination and DNA repair, while the RuvA-RuvB complex plays an important role in the rescue of blocked DNA replication forks via replication fork reversal (RFR). RuvA specifically binds to HJ cruciform DNA, conferring on it an open structure. The RuvB hexamer acts as an ATP-dependent pump, pulling dsDNA into and through the RuvAB complex. HJ branch migration allows RuvC to scan DNA until it finds its consensus sequence, where it cleaves and resolves the cruciform DNA. This chain is Holliday junction branch migration complex subunit RuvA, found in Shewanella loihica (strain ATCC BAA-1088 / PV-4).